Here is a 288-residue protein sequence, read N- to C-terminus: Glucose-1-phosphate thymidylyltransferase (288 aa).

Positions 108 and 223 each coordinate Mg(2+).

Belongs to the glucose-1-phosphate thymidylyltransferase family. Homotetramer. Mg(2+) is required as a cofactor.

It carries out the reaction dTTP + alpha-D-glucose 1-phosphate + H(+) = dTDP-alpha-D-glucose + diphosphate. In terms of biological role, catalyzes the formation of dTDP-glucose, from dTTP and glucose 1-phosphate, as well as its pyrophosphorolysis. The protein is Glucose-1-phosphate thymidylyltransferase (rmlA1) of Neisseria meningitidis serogroup A / serotype 4A (strain DSM 15465 / Z2491).